Reading from the N-terminus, the 224-residue chain is Urease accessory protein UreF (224 aa).

It belongs to the UreF family. UreD, UreF and UreG form a complex that acts as a GTP-hydrolysis-dependent molecular chaperone, activating the urease apoprotein by helping to assemble the nickel containing metallocenter of UreC. The UreE protein probably delivers the nickel.

Its subcellular location is the cytoplasm. Its function is as follows. Required for maturation of urease via the functional incorporation of the urease nickel metallocenter. The chain is Urease accessory protein UreF from Pseudomonas entomophila (strain L48).